Here is a 499-residue protein sequence, read N- to C-terminus: Probable cytosol aminopeptidase (499 aa).

Mn(2+) contacts are provided by K267 and D272. K279 is an active-site residue. Residues D290, D349, and E351 each coordinate Mn(2+). R353 is a catalytic residue.

It belongs to the peptidase M17 family. It depends on Mn(2+) as a cofactor.

Its subcellular location is the cytoplasm. The enzyme catalyses Release of an N-terminal amino acid, Xaa-|-Yaa-, in which Xaa is preferably Leu, but may be other amino acids including Pro although not Arg or Lys, and Yaa may be Pro. Amino acid amides and methyl esters are also readily hydrolyzed, but rates on arylamides are exceedingly low.. It carries out the reaction Release of an N-terminal amino acid, preferentially leucine, but not glutamic or aspartic acids.. Its function is as follows. Presumably involved in the processing and regular turnover of intracellular proteins. Catalyzes the removal of unsubstituted N-terminal amino acids from various peptides. The sequence is that of Probable cytosol aminopeptidase from Buchnera aphidicola subsp. Acyrthosiphon pisum (strain Tuc7).